We begin with the raw amino-acid sequence, 88 residues long: MSSFDKTMKFNFSDDSAETNVNEVLITVYDALQEKGYNPINQIVGYLLSGDPAYIPRHQDARNLIRKLERDELIEELVKSYLETHKEA.

It belongs to the UPF0297 family.

The chain is UPF0297 protein BPUM_2379 from Bacillus pumilus (strain SAFR-032).